Reading from the N-terminus, the 521-residue chain is MSDTEDLAALNDRLMAKNHALAEALNRAGKELTKAKSRLAQLAQPPLTFATMVKVDSTRTDADGIQHASAEVISGTRRMVVPVASNVNAARLTAGATVMLNEKLVLVEQRDADTVGQIRSVKQVLDDGRLIVTDASGNPVLIRRSGALAYADINQGDRIIVDPSVRLAIEALPAEGDKDLVLEETPDVTFADIGGLDSEIGRIRDAVQLPFRHRALFERYDLKPPKGVLLYGPPGNGKTMIAKAVANALCEGGYDSNGDGSISPAETRVKGVFLSVKGPELLNKYVGESERLIRLIFQRARERAADGNPVVVFIDEMDSLLRTRGSGVSSDVETTIVPQFLSELDGVESLDNVMVIGASNRVDMIDPAVLRPGRLDVKIRVGRPKTNQAIAIVDHYLTDDLPLENGVDAHALSAVLVHDIYGTSERRHLCDVQEENGQWHALFLADVVSGAMLKNIVDRAKTRAVKESIETGSDVALTVPLLAAAVEDEYRETRDSMADVDPEQWSRINGMDPIRRIRTAE.

The stretch at 4-44 (TEDLAALNDRLMAKNHALAEALNRAGKELTKAKSRLAQLAQ) forms a coiled coil. 235–240 (GNGKTM) is an ATP binding site.

This sequence belongs to the AAA ATPase family. In terms of assembly, homohexamer. Assembles into a hexameric ring structure.

The protein is AAA ATPase forming ring-shaped complexes of Bifidobacterium longum subsp. infantis (strain ATCC 15697 / DSM 20088 / JCM 1222 / NCTC 11817 / S12).